We begin with the raw amino-acid sequence, 1328 residues long: MESRDPAQPMSPGEATQSGARPADRYGLLKHSREFLDFFWDIAKPEQETRLAATEKLLEYLRGRPKGSEMKYALKRLITGLGVGRETARPCYSLALAQLLQSFEDLPLCSILQQIQEKYDLHQVKKAMLRPALFANLFGVLALFQSGRLVKDQEALMKSVKLLQALAQYQNHLQEQPRKALVDILSEVSKATLQEILPEVLKADLNIILSSPEQLELFLLAQQKVPSKLKKLVGSVNLFSDENVPRLVNVLKMAASSVKKDRKLPAIALDLLRLALKEDKFPRFWKEVVEQGLLKMQFWPASYLCFRLLGAALPLLTKEQLHLVMQGDVIRHYGEHVCTAKLPKQFKFAPEMDDYVGTFLEGCQDDPERQLAVLVAFSSVTNQGLPVTPTFWRVVRFLSPPALQGYVAWLRAMFLQPDLDSLVDFSTNNQKKAQDSSLHMPERAVFRLRKWIIFRLVSIVDSLHLEMEEALTEQVARFCLFHSFFVTKKPTSQIPETKHPFSFPLENQAREAVSSAFFSLLQTLSTQFKQAPGQTQGGQPWTYHLVQFADLLLNHSHNVTTVTPFTAQQRQAWDRMLQTLKELEAHSAEARAAAFQHLLLLVGIHLLKSPAESCDLLGDIQTCIRKSLGEKPRRSRTKTIDPQEPPWVEVLVEILLALLAQPSHLMRQVARSVFGHICSHLTPRALQLILDVLNPETSEDENDRVVVTDDSDERRLKGAEDKSEEGEDNRSSESEEESEGEESEEEERDGDVDQGFREQLMTVLQAGKALGGEDSENEEELGDEAMMALDQSLASLFAEQKLRIQARRDEKNKLQKEKALRRDFQIRVLDLVEVLVTKQPENALVLELLEPLLSIIRRSLRSSSSKQEQDLLHKTARIFTHHLCRARRYCHDLGERAGALHAQVERLVQQAGRQPDSPTALYHFNASLYLLRVLKGNTAEGCVHETQEKQKAGTDPSHMPTGPQAASCLDLNLVTRVYSTALSSFLTKRNSPLTVPMFLSLFSRHPVLCQSLLPILVQHITGPVRPRHQACLLLQKTLSMREVRSCFEDPEWKQLMGQVLAKVTENLRVLGEAQTKAQHQQALSSLELLNVLFRTCKHEKLTLDLTVLLGVLQGQQQSLQQGAHSTGSSRLHDLYWQAMKTLGVQRPKLEKKDAKEIPSATQSPISKKRKKKGFLPETKKRKKRKSEDGTPAEDGTPAATGGSQPPSMGRKKRNRTKAKVPAQANGTPTTKSPAPGAPTRSPSTPAKSPKLQKKNQKPSQVNGAPGSPTEPAGQKQHQKALPKKGVLGKSPLSALARKKARLSLVIRSPSLLQSGAKKKAQVRKAGKP.

The disordered stretch occupies residues methionine 1 to proline 22. Residues methionine 1–glutamate 582 form an interaction with MYB region. At serine 11 the chain carries Phosphoserine. Residues lysine 71 and lysine 158 each carry the N6-acetyllysine modification. 2 consecutive short sequence motifs (nuclear export signal) follow at residues serine 240–valine 258 and lysine 263–phenylalanine 281. The segment at serine 698 to aspartate 753 is disordered. A compositionally biased stretch (basic and acidic residues) spans aspartate 703–aspartate 721. Residues serine 734–valine 752 show a composition bias toward acidic residues. A Phosphoserine modification is found at serine 775. Residues arginine 1146–leucine 1292 form a disordered region. Over residues proline 1147 to glutamate 1156 the composition is skewed to basic and acidic residues. A Glycyl lysine isopeptide (Lys-Gly) (interchain with G-Cter in SUMO2) cross-link involves residue lysine 1148. The interval lysine 1151 to proline 1328 is required for nuclear and nucleolar localization. A phosphoserine mark is found at serine 1159 and serine 1163. Residues serine 1166–arginine 1184 show a composition bias toward basic residues. A Phosphoserine modification is found at serine 1186. 2 positions are modified to phosphothreonine: threonine 1190 and threonine 1196. Serine 1207 carries the post-translational modification Phosphoserine. Residues glycine 1209–alanine 1218 show a composition bias toward basic residues. Serine 1232 is subject to Phosphoserine. Threonine 1239 is subject to Phosphothreonine. Serine 1241 is subject to Phosphoserine. Residue threonine 1244 is modified to Phosphothreonine. Phosphoserine is present on residues serine 1248 and serine 1267. A Phosphothreonine modification is found at threonine 1269. Serine 1290 and serine 1303 each carry phosphoserine. A disordered region spans residues isoleucine 1306–proline 1328. Arginine 1307 is subject to Citrulline. 3 positions are modified to phosphoserine: serine 1308, serine 1310, and serine 1314. A compositionally biased stretch (basic residues) spans alanine 1316–proline 1328.

It belongs to the MYBBP1A family. As to quaternary structure, binds to and represses JUN and MYB via the leucine zipper regions present in these proteins. Also binds to and represses PPARGC1A: this interaction is abrogated when PPARGC1A is phosphorylated by MAPK1/ERK. Binds to and stimulates transcription by AHR. Binds to KPNA2. Interacts with CLOCK and CRY1. Component of the B-WICH complex, at least composed of SMARCA5/SNF2H, BAZ1B/WSTF, SF3B1, DEK, MYO1C, ERCC6, MYBBP1A and DDX21. In terms of processing, citrullinated by PADI4.

The protein resides in the cytoplasm. The protein localises to the nucleus. It is found in the nucleolus. May activate or repress transcription via interactions with sequence specific DNA-binding proteins. Repression may be mediated at least in part by histone deacetylase activity (HDAC activity). Acts as a corepressor and in concert with CRY1, represses the transcription of the core circadian clock component PER2. Preferentially binds to dimethylated histone H3 'Lys-9' (H3K9me2) on the PER2 promoter. Has a role in rRNA biogenesis together with PWP1. This chain is Myb-binding protein 1A (MYBBP1A), found in Homo sapiens (Human).